We begin with the raw amino-acid sequence, 87 residues long: Small ribosomal subunit protein uS15c (87 aa).

Belongs to the universal ribosomal protein uS15 family. As to quaternary structure, part of the 30S ribosomal subunit.

It is found in the plastid. It localises to the chloroplast. This Nicotiana tabacum (Common tobacco) protein is Small ribosomal subunit protein uS15c (rps15).